We begin with the raw amino-acid sequence, 465 residues long: Probable Xaa-Pro aminopeptidase PEPP (465 aa).

Aspartate 259, aspartate 270, glutamate 395, and glutamate 435 together coordinate Mn(2+).

It belongs to the peptidase M24B family. Mn(2+) is required as a cofactor.

It carries out the reaction Release of any N-terminal amino acid, including proline, that is linked to proline, even from a dipeptide or tripeptide.. In terms of biological role, catalyzes the removal of a penultimate prolyl residue from the N-termini of peptides. This Pyricularia oryzae (strain 70-15 / ATCC MYA-4617 / FGSC 8958) (Rice blast fungus) protein is Probable Xaa-Pro aminopeptidase PEPP (PEPP).